Here is a 209-residue protein sequence, read N- to C-terminus: Kinetochore protein Spc25 (209 aa).

Residues 74–107 (TRAVREKLAEERQKNAEMQAQLEKANDERIEQMD) are a coiled coil.

This sequence belongs to the SPC25 family. In terms of assembly, component of the Ndc80 complex, which is composed of Ndc80, Nuf2 and Spc25.

The protein localises to the nucleus. It is found in the chromosome. The protein resides in the centromere. Its subcellular location is the kinetochore. Functionally, acts as a component of the essential kinetochore-associated Ndc80 complex, which is required for chromosome segregation and spindle checkpoint activity during meiosis and mitosis. Required for kinetochore integrity and the organization of stable microtubule binding sites in the outer plate of the kinetochore. Participates in SAC signaling that responds specifically to disruptions in spindle microtubule dynamics. The NDC80 complex synergistically enhances the affinity of the SKA1 complex for microtubules and may allow the NDC80 complex to track depolymerizing microtubules. The protein is Kinetochore protein Spc25 of Drosophila grimshawi (Hawaiian fruit fly).